The sequence spans 295 residues: Ubiquinol-cytochrome c reductase complex assembly factor 1 (295 aa).

Belongs to the CBP3 family. As to quaternary structure, interacts with UQCC2. Interacts with UQCC3. Forms a complex, named COMB/coordinator of mitochondrial CYTB biogenesis, composed of UQCC1, UQCC2, UQCC4, UQCC5 and UQCC6; stabilizes nascent cytochrome b/MT-CYB and promotes its membrane insertion. Forms a complex, named COMA, composed of UQCC1, UQCC2 and UQCC4; activates MT-CYB translation. Forms a complex, named COMC, composed of UQCC1, UQCC2; UQCC3 and UQCC4; mediates MT-CYB hemylation and association with the first nuclear-encoded CIII subunit UQCRQ. As to expression, in the brain it is restricted to the olfactory bulb, the hippocampus, the piriform cortex and the Purkinje cells.

The protein resides in the mitochondrion inner membrane. It localises to the cytoplasmic vesicle. Required for the assembly of the ubiquinol-cytochrome c reductase complex (mitochondrial respiratory chain complex III or cytochrome b-c1 complex). Involved in cytochrome b translation and/or stability. The polypeptide is Ubiquinol-cytochrome c reductase complex assembly factor 1 (Uqcc1) (Mus musculus (Mouse)).